We begin with the raw amino-acid sequence, 46 residues long: Small, acid-soluble spore protein N (46 aa).

Positions 1–46 (MAKMKHGSAQFRPDHLGTQPRKSDANKGKKMNTKGNENPQYIPPKG) are disordered.

It belongs to the SspN family.

The protein resides in the spore core. This is Small, acid-soluble spore protein N from Halalkalibacterium halodurans (strain ATCC BAA-125 / DSM 18197 / FERM 7344 / JCM 9153 / C-125) (Bacillus halodurans).